The chain runs to 410 residues: Pectate lyase PEL9 (410 aa).

A signal peptide spans Met-1–Ala-18. Residues Asp-191, Asp-215, Asp-216, and Asp-219 each coordinate Ca(2+). N-linked (GlcNAc...) asparagine glycosylation occurs at Asn-234. The Proton acceptor role is filled by Lys-271. The span at Gly-342–Glu-351 shows a compositional bias: polar residues. Disordered stretches follow at residues Gly-342 to Gly-361 and Glu-381 to Ala-410.

It belongs to the polysaccharide lyase 9 family. Ca(2+) is required as a cofactor.

The protein resides in the secreted. The catalysed reaction is Eliminative cleavage of (1-&gt;4)-alpha-D-galacturonan to give oligosaccharides with 4-deoxy-alpha-D-galact-4-enuronosyl groups at their non-reducing ends.. With respect to regulation, inhibited by iron ions. Activated in presence of the surfactant polysorbate 20, while inhibited in the presence of Triton X-100 and sodium dodecyl sulfate. Inhibited in presence of the organic solvents methanol, ethanol, propan-2-ol and acetone. Its function is as follows. Presents an endo-cleaving activity on the homogalacturonan (HG) region in pectin. Active on homogalacturonan with a degree of polymerization above 4, and does not appear to be affected by the degree of methylation of the substrate. Does not degrade linear rhamnogalacturonan. The protein is Pectate lyase PEL9 of Emericella nidulans (strain FGSC A4 / ATCC 38163 / CBS 112.46 / NRRL 194 / M139) (Aspergillus nidulans).